Consider the following 229-residue polypeptide: Nectarin-1 (229 aa).

The N-terminal stretch at 1–32 (MAAFGIKSKIFQIMEMTILFLFAISIDRYCFA) is a signal peptide. Cys-42 and Cys-57 are oxidised to a cystine. N-linked (GlcNAc...) asparagine glycosylation occurs at Asn-60. In terms of domain architecture, Cupin type-1 spans 69-217 (FAISKPGATN…TFQINIEDVQ (149 aa)). His-117, His-119, Glu-124, and His-163 together coordinate Mn(2+).

The protein belongs to the germin family. In terms of assembly, monomer. In the absence of manganese, it forms tetrameric and pentameric forms which show superoxide dismutase activity. The cofactor is Mn(2+). In terms of processing, glycosylated.

The protein resides in the secreted. It localises to the extracellular space. The protein localises to the apoplast. It carries out the reaction 2 superoxide + 2 H(+) = H2O2 + O2. May interact with bacterial adhesins thereby protecting the reproductive tissues from microbial attack. Has no oxalate oxidase activity. In Nicotiana plumbaginifolia (Leadwort-leaved tobacco), this protein is Nectarin-1 (NEC1).